A 206-amino-acid chain; its full sequence is Homoserine/homoserine lactone efflux protein (206 aa).

The next 6 membrane-spanning stretches (helical) occupy residues 5-25 (WWFA…SGAI), 45-65 (GLQT…GTLF), 68-88 (SLLA…WLGI), 117-137 (FVNL…PQFI), 148-168 (LILG…YATL), and 182-202 (MKAL…LLAS).

The protein belongs to the Rht family.

The protein localises to the cell membrane. Its function is as follows. Conducts the efflux of homoserine and homoserine lactone. This chain is Homoserine/homoserine lactone efflux protein (rhtB), found in Salmonella typhimurium (strain LT2 / SGSC1412 / ATCC 700720).